Reading from the N-terminus, the 619-residue chain is Pentatricopeptide repeat-containing protein At3g22470, mitochondrial (619 aa).

The transit peptide at 1 to 28 directs the protein to the mitochondrion; that stretch reads MIQRLIPLNRKASNFTQILEKGTSLLHY. PPR repeat units follow at residues 69–103, 104–138, 139–173, 174–208, 209–243, 244–278, 279–313, 314–348, 349–383, 384–418, 419–453, 454–488, 489–523, 524–558, and 559–593; these read TPID…GIEH, DMYT…GYEP, DTIT…KQRP, DLVT…GFQP, DEVT…NIKA, SVVQ…GIKA, DVVT…NIIP, DVVT…GIAP, DTIT…GCEP, DIVT…GLIP, NTIT…GVPP, SVVT…RMTL, GIGI…GVKP, DVVT…GCTP, and DDFT…GFSA.

This sequence belongs to the PPR family. P subfamily.

The protein localises to the mitochondrion. This chain is Pentatricopeptide repeat-containing protein At3g22470, mitochondrial, found in Arabidopsis thaliana (Mouse-ear cress).